Here is a 238-residue protein sequence, read N- to C-terminus: UDP-2,3-diacylglucosamine hydrolase (238 aa).

The Mn(2+) site is built by Asp8, His10, Asp41, Asn78, and His113. 78–79 contributes to the substrate binding site; sequence NR. Residues Asp121, Ser159, Asn163, Lys166, and His194 each coordinate substrate. The Mn(2+) site is built by His194 and His196.

The protein belongs to the LpxH family. Requires Mn(2+) as cofactor.

The protein resides in the cell inner membrane. It catalyses the reaction UDP-2-N,3-O-bis[(3R)-3-hydroxytetradecanoyl]-alpha-D-glucosamine + H2O = 2-N,3-O-bis[(3R)-3-hydroxytetradecanoyl]-alpha-D-glucosaminyl 1-phosphate + UMP + 2 H(+). The protein operates within glycolipid biosynthesis; lipid IV(A) biosynthesis; lipid IV(A) from (3R)-3-hydroxytetradecanoyl-[acyl-carrier-protein] and UDP-N-acetyl-alpha-D-glucosamine: step 4/6. Hydrolyzes the pyrophosphate bond of UDP-2,3-diacylglucosamine to yield 2,3-diacylglucosamine 1-phosphate (lipid X) and UMP by catalyzing the attack of water at the alpha-P atom. Involved in the biosynthesis of lipid A, a phosphorylated glycolipid that anchors the lipopolysaccharide to the outer membrane of the cell. This chain is UDP-2,3-diacylglucosamine hydrolase, found in Shewanella piezotolerans (strain WP3 / JCM 13877).